Here is a 414-residue protein sequence, read N- to C-terminus: 2,3-diketo-5-methylthiopentyl-1-phosphate enolase (414 aa).

Catalysis depends on Lys99, which acts as the Proton acceptor. Substrate contacts are provided by residues Lys148, 174 to 177 (KDDE), His265, Gly338, and 360 to 361 (GG). Mg(2+) contacts are provided by Lys174, Asp176, and Glu177. Position 174 is an N6-carboxylysine (Lys174).

It belongs to the RuBisCO large chain family. Type IV subfamily. As to quaternary structure, homodimer. Mg(2+) is required as a cofactor.

The enzyme catalyses 5-methylsulfanyl-2,3-dioxopentyl phosphate = 2-hydroxy-5-methylsulfanyl-3-oxopent-1-enyl phosphate. It participates in amino-acid biosynthesis; L-methionine biosynthesis via salvage pathway; L-methionine from S-methyl-5-thio-alpha-D-ribose 1-phosphate: step 3/6. Functionally, catalyzes the enolization of 2,3-diketo-5-methylthiopentyl-1-phosphate (DK-MTP-1-P) into 2-hydroxy-3-keto-5-methylthiopentenyl-1-phosphate (HK-MTPenyl-1-P). This Bacillus cereus (strain Q1) protein is 2,3-diketo-5-methylthiopentyl-1-phosphate enolase.